The primary structure comprises 319 residues: tRNA-cytidine(32) 2-sulfurtransferase (319 aa).

A PP-loop motif motif is present at residues 43-48; it reads SGGKDS. [4Fe-4S] cluster is bound by residues cysteine 118, cysteine 121, and cysteine 209.

This sequence belongs to the TtcA family. As to quaternary structure, homodimer. Mg(2+) is required as a cofactor. Requires [4Fe-4S] cluster as cofactor.

It is found in the cytoplasm. The enzyme catalyses cytidine(32) in tRNA + S-sulfanyl-L-cysteinyl-[cysteine desulfurase] + AH2 + ATP = 2-thiocytidine(32) in tRNA + L-cysteinyl-[cysteine desulfurase] + A + AMP + diphosphate + H(+). Its pathway is tRNA modification. Catalyzes the ATP-dependent 2-thiolation of cytidine in position 32 of tRNA, to form 2-thiocytidine (s(2)C32). The sulfur atoms are provided by the cysteine/cysteine desulfurase (IscS) system. This is tRNA-cytidine(32) 2-sulfurtransferase from Neisseria meningitidis serogroup C / serotype 2a (strain ATCC 700532 / DSM 15464 / FAM18).